The primary structure comprises 506 residues: Phenylacetaldehyde synthase (506 aa).

Pro-101, His-202, and His-317 together coordinate L-phenylalanine. Lys-318 is modified (N6-(pyridoxal phosphate)lysine).

It belongs to the group II decarboxylase family. Homotetramer. Pyridoxal 5'-phosphate serves as cofactor. As to expression, highly expressed in corolla limbs and at lower levels in corolla tubes and ovaries.

The enzyme catalyses L-phenylalanine + O2 + H2O + H(+) = 2-phenylacetaldehyde + H2O2 + NH4(+) + CO2. Its function is as follows. Bifunctional enzyme that catalyzes the decarboxylation of L-phenylalanine to 2-phenylethylamine, which is then oxidized to form 2-phenylacetaldehyde, a constituent of floral scent. 2-phenylacetaldehyde is a precursor of 2-phenylethanol, another constituent of floral scent. The chain is Phenylacetaldehyde synthase from Petunia hybrida (Petunia).